The chain runs to 536 residues: Allene oxide synthase, chloroplastic (536 aa).

The transit peptide at 1-58 (MASSALNNLVAVNPNTLSPSPKSTPLPNTFSNLRRVSAFRPIKASLFGDSPIKIPGIT) directs the protein to the chloroplast. The heme b site is built by K151, H182, and K186. (13S)-hydroperoxy-(9Z,11E)-octadecadienoate-binding residues include S262, N339, and K345. N339 contacts (13S)-hydroperoxy-(9Z,11E,15Z)-octadecatrienoate. Residues K487 and C489 each contribute to the heme b site.

The protein belongs to the cytochrome P450 family. Heme b serves as cofactor.

It localises to the plastid. Its subcellular location is the chloroplast. It carries out the reaction (13S)-hydroperoxy-(9Z,11E,15Z)-octadecatrienoate = (9Z,13S,15Z)-12,13-epoxyoctadeca-9,11,15-trienoate + H2O. The enzyme catalyses (13S)-hydroperoxy-(9Z,11E)-octadecadienoate = (9Z,13S)-12,13-epoxyoctadeca-9,11-dienoate + H2O. Its pathway is lipid metabolism; oxylipin biosynthesis. Cytochrome P450 enzyme involved in the biosynthesis of oxylipin jasmonates, important phytohormones acting as growth regulators and signaling molecules for plant defense. Functions as an allene oxide synthase that converts hydroperoxy fatty acids to unstable allene epoxides. Catalyzes the dehydration of 13-HPOTE ((13S)-hydroperoxy-(9Z,11E,15Z)-octadecatrienoate), as well as 13-HPODE ((13S)-hydroperoxy-(9Z,11E)-octadecadienoate). The polypeptide is Allene oxide synthase, chloroplastic (CYP74A) (Linum usitatissimum (Flax)).